The following is a 385-amino-acid chain: Acetate kinase (385 aa).

N9 provides a ligand contact to Mg(2+). K16 serves as a coordination point for ATP. Residue R87 participates in substrate binding. The active-site Proton donor/acceptor is D144. ATP is bound by residues 202-206 (HLGSG) and 277-279 (DMR). E373 contacts Mg(2+).

The protein belongs to the acetokinase family. Homodimer. The cofactor is Mg(2+). Mn(2+) serves as cofactor.

It is found in the cytoplasm. The enzyme catalyses acetate + ATP = acetyl phosphate + ADP. The protein operates within metabolic intermediate biosynthesis; acetyl-CoA biosynthesis; acetyl-CoA from acetate: step 1/2. Its function is as follows. Catalyzes the formation of acetyl phosphate from acetate and ATP. Can also catalyze the reverse reaction. The polypeptide is Acetate kinase (Rickettsia prowazekii (strain Madrid E)).